Consider the following 226-residue polypeptide: Ribosome maturation factor RimM (226 aa).

The PRC barrel domain maps to 144 to 225 (ADEFYWVDLI…RIVVDWEADY (82 aa)).

It belongs to the RimM family. As to quaternary structure, binds ribosomal protein uS19.

It is found in the cytoplasm. An accessory protein needed during the final step in the assembly of 30S ribosomal subunit, possibly for assembly of the head region. Essential for efficient processing of 16S rRNA. May be needed both before and after RbfA during the maturation of 16S rRNA. It has affinity for free ribosomal 30S subunits but not for 70S ribosomes. The protein is Ribosome maturation factor RimM of Burkholderia ambifaria (strain ATCC BAA-244 / DSM 16087 / CCUG 44356 / LMG 19182 / AMMD) (Burkholderia cepacia (strain AMMD)).